A 300-amino-acid polypeptide reads, in one-letter code: MNTLVLKIDAVLSKHLKKQLASYTISSQNTYVAFAAKKNGVTVLLYKSGKLVLQGNGANALAQELNLPVAKTVFEASNNSQDIPIIGSDEVGNGSYFGGIAVVASFVDPKDHSFLKKLGVDDSKKLSDKTIQQIAPLLEKQIPHQSLLLSPKKYNELVGKSKPYNAISIKVALHNQAIFLLLQKGIQPKQIVIDAFTSQSNYEKHLKKEKNHFPNPLTFQEKAESHYLAVAVSSIIARNLFLDNLDQLGQDLGYQLPSGAGSASDKVASQLLAAYGMSSLEYSAKLHFANTHKAQALLTK.

The RNase H type-2 domain occupies 83 to 300 (IPIIGSDEVG…THKAQALLTK (218 aa)). The a divalent metal cation site is built by Asp-89, Glu-90, and Asp-194.

Belongs to the RNase HII family. RnhC subfamily. The cofactor is Mn(2+). Mg(2+) is required as a cofactor.

It is found in the cytoplasm. It carries out the reaction Endonucleolytic cleavage to 5'-phosphomonoester.. Its function is as follows. Endonuclease that specifically degrades the RNA of RNA-DNA hybrids. The chain is Ribonuclease HIII from Streptococcus pyogenes serotype M49 (strain NZ131).